The sequence spans 580 residues: Arrestin domain-containing protein A (580 aa).

N-linked (GlcNAc...) asparagine glycosylation is found at asparagine 27, asparagine 33, and asparagine 60. The tract at residues 31–54 (NVNTTSSHHHHHSNSGNAEVSFNG) is disordered. Disordered stretches follow at residues 67–86 (ETHS…EISI) and 95–114 (MTMS…HKES). A helical transmembrane segment spans residues 118–138 (NLSLGGIVGAVVGAVTGGVMI). Asparagine 149, asparagine 341, and asparagine 342 each carry an N-linked (GlcNAc...) asparagine glycan. The FYVE-type zinc finger occupies 468-528 (DEHATACRKC…VCEECYPIAT (61 aa)). Residues cysteine 474, cysteine 477, cysteine 490, cysteine 493, cysteine 498, cysteine 501, cysteine 520, and cysteine 523 each contribute to the Zn(2+) site.

This sequence belongs to the arrestin family.

The protein localises to the membrane. The chain is Arrestin domain-containing protein A (adcA) from Dictyostelium discoideum (Social amoeba).